A 594-amino-acid chain; its full sequence is Probable methylenetetrahydrofolate reductase (NADH) (594 aa).

The Proton donor/acceptor role is filled by E21. NAD(+) contacts are provided by residues 21–26 (EYFPPK) and 52–53 (TW). Residues 52-53 (TW), H81, 111-113 (RGD), Y153, 157-160 (HPDA), D175, and K182 contribute to the FAD site. D113 serves as a coordination point for substrate. 2 residues coordinate substrate: Q193 and Y285.

Belongs to the methylenetetrahydrofolate reductase family. As to quaternary structure, homodimer. It depends on FAD as a cofactor.

It catalyses the reaction (6S)-5-methyl-5,6,7,8-tetrahydrofolate + NAD(+) = (6R)-5,10-methylene-5,6,7,8-tetrahydrofolate + NADH + H(+). The protein operates within one-carbon metabolism; tetrahydrofolate interconversion. Plant MTHFRs strongly prefer NADH over NADPH. Not inhibited by methionine or S-adenosylmethionine. The probable reversibility of the MTHFR reaction in plants suggests that they can metabolize the methyl group of 5,10-methylenetetrahydrofolate to serine, sugars and starch. In Oryza sativa subsp. japonica (Rice), this protein is Probable methylenetetrahydrofolate reductase (NADH).